The chain runs to 390 residues: Protein AC109 (390 aa).

The protein localises to the host cytoplasm. It is found in the host nucleus. In terms of biological role, plays a role in the transport of the budded virion (BV) to the host nucleus and for occlusion of viral progeny. The sequence is that of Protein AC109 (ORF109) from Lepidoptera (butterflies and moths).